An 89-amino-acid polypeptide reads, in one-letter code: Small ribosomal subunit protein uS15 (89 aa).

The span at M1–D21 shows a compositional bias: basic and acidic residues. Positions M1–G23 are disordered.

It belongs to the universal ribosomal protein uS15 family. As to quaternary structure, part of the 30S ribosomal subunit. Forms a bridge to the 50S subunit in the 70S ribosome, contacting the 23S rRNA.

In terms of biological role, one of the primary rRNA binding proteins, it binds directly to 16S rRNA where it helps nucleate assembly of the platform of the 30S subunit by binding and bridging several RNA helices of the 16S rRNA. Its function is as follows. Forms an intersubunit bridge (bridge B4) with the 23S rRNA of the 50S subunit in the ribosome. In Bacillus velezensis (strain DSM 23117 / BGSC 10A6 / LMG 26770 / FZB42) (Bacillus amyloliquefaciens subsp. plantarum), this protein is Small ribosomal subunit protein uS15.